The sequence spans 116 residues: Spexin (116 aa).

The N-terminal stretch at 1 to 26 (MKGLRSLAATTLALFLVFVFLGNSSC) is a signal peptide. A propeptide spanning residues 27–35 (APQRLLERR) is cleaved from the precursor. A Glutamine amide modification is found at glutamine 49. 2 consecutive propeptides follow at residues 50-116 (GRRF…LLNW) and 74-116 (PNPQ…LLNW). Positions 55–73 (SDQSRRKDLSDRPLPERRS) are enriched in basic and acidic residues. The tract at residues 55–77 (SDQSRRKDLSDRPLPERRSPNPQ) is disordered.

It belongs to the spexin family. In terms of tissue distribution, expressed in the type I glomic cells within the carotid body (at protein level). Expressed predominantly in pancreas, testis, kidney, brain and placenta. Expressed in submucosal layer of esophagus and stomach fundus.

The protein localises to the secreted. It is found in the extracellular space. The protein resides in the cytoplasmic vesicle. Its subcellular location is the secretory vesicle. Functionally, plays a role as a central modulator of cardiovascular and renal function and nociception. Also plays a role in energy metabolism and storage. Inhibits adrenocortical cell proliferation with minor stimulation on corticosteroid release. In terms of biological role, acts as a ligand for galanin receptors GALR2 and GALR3. Intracerebroventricular administration of the peptide induces an increase in arterial blood pressure, a decrease in both heart rate and renal excretion and delayed natriuresis. Intraventricular administration of the peptide induces antinociceptive activity. Also induces contraction of muscarinic-like stomach smooth muscles. Intraperitoneal administration of the peptide induces a reduction in food consumption and body weight. Inhibits long chain fatty acid uptake into adipocytes. Its function is as follows. Intracerebroventricular administration of the peptide induces a decrease in heart rate, but no change in arterial pressure, and an increase in urine flow rate. Intraventricular administration of the peptide induces antinociceptive activity. In Homo sapiens (Human), this protein is Spexin (SPX).